Consider the following 265-residue polypeptide: Indole-3-glycerol phosphate synthase (265 aa).

It belongs to the TrpC family.

The enzyme catalyses 1-(2-carboxyphenylamino)-1-deoxy-D-ribulose 5-phosphate + H(+) = (1S,2R)-1-C-(indol-3-yl)glycerol 3-phosphate + CO2 + H2O. It participates in amino-acid biosynthesis; L-tryptophan biosynthesis; L-tryptophan from chorismate: step 4/5. In Xanthomonas euvesicatoria pv. vesicatoria (strain 85-10) (Xanthomonas campestris pv. vesicatoria), this protein is Indole-3-glycerol phosphate synthase.